A 926-amino-acid polypeptide reads, in one-letter code: Protein O-mannosyl-transferase Tmtc3 (926 aa).

The segment at 1–26 (MSTNPNPGIHQYAPSTLPREREREGA) is disordered. Residues 1–36 (MSTNPNPGIHQYAPSTLPREREREGATNSPQRNLLE) are Cytoplasmic-facing. The helical transmembrane segment at 37-57 (FLCICVACIVCYYNSTQCGLV) threads the bilayer. Over 58–114 (FDDISAIRDNKDLRPHTPLINVFLNDFWGTPMRKEQSHKSYRPLTVLTFRFNYLLHA) the chain is Extracellular. A helical membrane pass occupies residues 115 to 135 (LEPFGYHLVNLLLHLSVCLLW). At 136-169 (RRVCRLLLRQCAASGSNAISAPSSSSVSQLNTCA) the chain is on the cytoplasmic side. A helical membrane pass occupies residues 170–190 (FVASLLFAVHPVHTEAVTGVV). Residues 191–192 (GR) lie on the Extracellular side of the membrane. A helical membrane pass occupies residues 193-213 (AELLSSICFLAAFLSYAKSVG). Over 214–222 (DSGCPRRTN) the chain is Cytoplasmic. A run of 2 helical transmembrane segments spans residues 223 to 239 (WLTLFGCFGSCLLASML) and 240 to 259 (CKEQGITIAGICVVYELFVV). Residues 260–303 (HQLRPLHLCHFVLRLFDERTEQQSPKLANPSGIRRWSSSTLWKR) are Cytoplasmic-facing. The chain crosses the membrane as a helical span at residues 304–324 (LSFLVGITLTLLVGRVYVMGS). The Extracellular portion of the chain corresponds to 325–345 (QLPIFTRFDNPASAADTPERQ). A helical transmembrane segment spans residues 346 to 366 (LTYGYLIYLNCWLLLCPSLLC). The Cytoplasmic portion of the chain corresponds to 367–384 (CDWTMGTVPLLQGFTDSR). Residues 385 to 405 (NITTLLTFLALGAMVAKTCFT) form a helical membrane-spanning segment. Residues 406-419 (RNLALSRTLIMCLG) lie on the Extracellular side of the membrane. Residues 420-440 (WMVLPFLPASNLFFPVGFVVA) form a helical membrane-spanning segment. The Cytoplasmic segment spans residues 441–442 (ER). A helical membrane pass occupies residues 443–463 (ILYMPSMGYCLLVAYGFEQLQ). Over 464–926 (RRGSLSWQRF…RPTHKSRKRS (463 aa)) the chain is Extracellular. TPR repeat units lie at residues 514–547 (AKLYNNVGHALENEGKFEEALLYFQQAVRIQTDD), 548–581 (IGAHINVGRTFNNLKRYAEAEQAYVQAKALFPQA), 596–630 (LNVFINLANLIAKNQTRLEEADHLYRQAISMRSDY), 631–664 (VQAYINRGDILMKLNRTAQAQEVYEQALLYDNEN), 665–698 (ADIYYNLGVVFLEQGKSQQAQVYFNKAIELYPEH), 736–769 (EKVYFNLGMLAMDESSFDEAEQFFKRAIHLKADF), 770–803 (RSALFNLALLLADTKRPLDAVPFLNQLIRHHPSH), 805–838 (KGLILLGDIYINHMKDLDEAEKCYRSILHYDPHN), and 839–872 (TQGLHNLCVVFVERKRLAKAAACLQYAQRLAPAE). Asparagine 609 and asparagine 645 each carry an N-linked (GlcNAc...) asparagine glycan.

This sequence belongs to the TMTC family.

Its subcellular location is the membrane. The protein localises to the endoplasmic reticulum. The catalysed reaction is a di-trans,poly-cis-dolichyl beta-D-mannosyl phosphate + L-seryl-[protein] = 3-O-(alpha-D-mannosyl)-L-seryl-[protein] + a di-trans,poly-cis-dolichyl phosphate + H(+). It carries out the reaction a di-trans,poly-cis-dolichyl beta-D-mannosyl phosphate + L-threonyl-[protein] = 3-O-(alpha-D-mannosyl)-L-threonyl-[protein] + a di-trans,poly-cis-dolichyl phosphate + H(+). The protein operates within protein modification; protein glycosylation. Transfers mannosyl residues to the hydroxyl group of serine or threonine residues. This is Protein O-mannosyl-transferase Tmtc3 from Drosophila melanogaster (Fruit fly).